Reading from the N-terminus, the 35-residue chain is uncharacterized protein (35 aa).

This is an uncharacterized protein from Haemophilus influenzae (strain ATCC 51907 / DSM 11121 / KW20 / Rd).